Reading from the N-terminus, the 288-residue chain is Cell division protein ZipA (288 aa).

Met-1 is a topological domain (periplasmic). The helical transmembrane segment at 2-22 (EIGLREWLIVIGIIVIAGILF) threads the bilayer. At 23–288 (DGWRRMRGGK…FERRALTQKR (266 aa)) the chain is on the cytoplasmic side. 2 stretches are compositionally biased toward basic and acidic residues: residues 66–75 (KEPQLDEHDL) and 83–93 (REAREPRESGS). The interval 66 to 141 (KEPQLDEHDL…AKSSPAVADK (76 aa)) is disordered. A compositionally biased stretch (low complexity) spans 106–117 (GDLNLDLDLDGG).

The protein belongs to the ZipA family. As to quaternary structure, interacts with FtsZ via their C-terminal domains.

It is found in the cell inner membrane. Essential cell division protein that stabilizes the FtsZ protofilaments by cross-linking them and that serves as a cytoplasmic membrane anchor for the Z ring. Also required for the recruitment to the septal ring of downstream cell division proteins. The chain is Cell division protein ZipA from Pseudomonas fluorescens (strain Pf0-1).